The following is a 219-amino-acid chain: N-(5'-phosphoribosyl)anthranilate isomerase (219 aa).

It belongs to the TrpF family.

The enzyme catalyses N-(5-phospho-beta-D-ribosyl)anthranilate = 1-(2-carboxyphenylamino)-1-deoxy-D-ribulose 5-phosphate. Its pathway is amino-acid biosynthesis; L-tryptophan biosynthesis; L-tryptophan from chorismate: step 3/5. This is N-(5'-phosphoribosyl)anthranilate isomerase from Bradyrhizobium sp. (strain BTAi1 / ATCC BAA-1182).